A 643-amino-acid polypeptide reads, in one-letter code: Transducer protein Htr8 (643 aa).

The next 5 membrane-spanning stretches (helical) occupy residues 48–68, 79–99, 115–134, 149–169, and 184–204; these read VFVL…GTES, PGIL…LASI, VLAS…EAHF, WLPF…FGMI, and PWVW…ALMA. The region spanning 273–326 is the HAMP domain; the sequence is ERLEATANTYGAAMARAADGDLSVRLDPDVENDAMAAIAASFNEMLDETETTIR. Residues 345 to 581 enclose the Methyl-accepting transducer domain; the sequence is GVVEIEDASG…EAVSMIAEVS (237 aa).

Belongs to the methyl-accepting chemotaxis (MCP) protein family. Methylated by CheR.

Its subcellular location is the cell membrane. In terms of biological role, potentially involved in chemo- or phototactic signal transduction. The sequence is that of Transducer protein Htr8 (htr8) from Halobacterium salinarum (strain ATCC 29341 / DSM 671 / R1).